A 421-amino-acid chain; its full sequence is UPF0229 protein lpl2726 (421 aa).

The tract at residues 83–110 (IAGDRIKRPGGGGSGGAGGNASDSGEGE) is disordered. The segment covering 91–101 (PGGGGSGGAGG) has biased composition (gly residues).

The protein belongs to the UPF0229 family.

This chain is UPF0229 protein lpl2726, found in Legionella pneumophila (strain Lens).